The sequence spans 333 residues: NADH-quinone oxidoreductase subunit H (333 aa).

Transmembrane regions (helical) follow at residues Phe-15–Tyr-35, Phe-88–Phe-108, Ile-117–Thr-137, Ile-159–Leu-179, Val-191–Glu-211, Trp-239–Val-259, Ile-274–Val-296, and Val-313–Phe-333.

The protein belongs to the complex I subunit 1 family. As to quaternary structure, NDH-1 is composed of 14 different subunits. Subunits NuoA, H, J, K, L, M, N constitute the membrane sector of the complex.

It localises to the cell membrane. The enzyme catalyses a quinone + NADH + 5 H(+)(in) = a quinol + NAD(+) + 4 H(+)(out). In terms of biological role, NDH-1 shuttles electrons from NADH, via FMN and iron-sulfur (Fe-S) centers, to quinones in the respiratory chain. The immediate electron acceptor for the enzyme in this species is believed to be ubiquinone. Couples the redox reaction to proton translocation (for every two electrons transferred, four hydrogen ions are translocated across the cytoplasmic membrane), and thus conserves the redox energy in a proton gradient. This subunit may bind ubiquinone. The polypeptide is NADH-quinone oxidoreductase subunit H (Bacillus cereus (strain G9842)).